The following is a 140-amino-acid chain: 3-hydroxyacyl-[acyl-carrier-protein] dehydratase FabZ (140 aa).

His47 is an active-site residue.

The protein belongs to the thioester dehydratase family. FabZ subfamily.

Its subcellular location is the cytoplasm. It catalyses the reaction a (3R)-hydroxyacyl-[ACP] = a (2E)-enoyl-[ACP] + H2O. In terms of biological role, involved in unsaturated fatty acids biosynthesis. Catalyzes the dehydration of short chain beta-hydroxyacyl-ACPs and long chain saturated and unsaturated beta-hydroxyacyl-ACPs. This chain is 3-hydroxyacyl-[acyl-carrier-protein] dehydratase FabZ, found in Streptococcus sanguinis (strain SK36).